Consider the following 80-residue polypeptide: Small ribosomal subunit protein bS18 (80 aa).

The protein belongs to the bacterial ribosomal protein bS18 family. Part of the 30S ribosomal subunit. Forms a tight heterodimer with protein bS6.

Functionally, binds as a heterodimer with protein bS6 to the central domain of the 16S rRNA, where it helps stabilize the platform of the 30S subunit. The sequence is that of Small ribosomal subunit protein bS18 from Clostridium perfringens (strain ATCC 13124 / DSM 756 / JCM 1290 / NCIMB 6125 / NCTC 8237 / Type A).